The primary structure comprises 189 residues: Probable nicotinate-nucleotide adenylyltransferase (189 aa).

This sequence belongs to the NadD family.

The enzyme catalyses nicotinate beta-D-ribonucleotide + ATP + H(+) = deamido-NAD(+) + diphosphate. It participates in cofactor biosynthesis; NAD(+) biosynthesis; deamido-NAD(+) from nicotinate D-ribonucleotide: step 1/1. Catalyzes the reversible adenylation of nicotinate mononucleotide (NaMN) to nicotinic acid adenine dinucleotide (NaAD). This is Probable nicotinate-nucleotide adenylyltransferase from Bacillus cereus (strain AH820).